Reading from the N-terminus, the 156-residue chain is Cell division protein SepF (156 aa).

It belongs to the SepF family. As to quaternary structure, homodimer. Interacts with FtsZ.

Its subcellular location is the cytoplasm. In terms of biological role, cell division protein that is part of the divisome complex and is recruited early to the Z-ring. Probably stimulates Z-ring formation, perhaps through the cross-linking of FtsZ protofilaments. Its function overlaps with FtsA. The sequence is that of Cell division protein SepF from Ruminiclostridium cellulolyticum (strain ATCC 35319 / DSM 5812 / JCM 6584 / H10) (Clostridium cellulolyticum).